A 93-amino-acid polypeptide reads, in one-letter code: Parbolysin P2 (93 aa).

2 cysteine pairs are disulfide-bonded: C16–C37 and C22–C33.

It belongs to the worm cytolysin family. Localized within the skin and proboscis and are most readily isolated from body mucus secretions.

Its subcellular location is the secreted. Its function is as follows. Cytolysin that shows hemolytic activity (on bovine erythrocytes, HC(50)=5.75 mg/ml). This hemolytic activity is completely inhibited by small unilamelar vesicles composed of PC/PG, PC/PI and PC/PS in 1:1 molar ratios (with at least 100 mg/ml concentration). The chain is Parbolysin P2 from Parborlasia corrugatus (Antarctic nemertean worm).